We begin with the raw amino-acid sequence, 207 residues long: Urease accessory protein UreG (207 aa).

Residue 13–20 (GPVGSGKT) coordinates GTP.

It belongs to the SIMIBI class G3E GTPase family. UreG subfamily. As to quaternary structure, homodimer. UreD, UreF and UreG form a complex that acts as a GTP-hydrolysis-dependent molecular chaperone, activating the urease apoprotein by helping to assemble the nickel containing metallocenter of UreC. The UreE protein probably delivers the nickel.

It is found in the cytoplasm. Functionally, facilitates the functional incorporation of the urease nickel metallocenter. This process requires GTP hydrolysis, probably effectuated by UreG. This chain is Urease accessory protein UreG, found in Azoarcus sp. (strain BH72).